We begin with the raw amino-acid sequence, 359 residues long: MSTENTLSVADLARENVRNLVPYQSARRLGGNGDVWLNANEFPTAVEFQLTQQTLNRYPECQPKAVIENYAQYAGVKPEQVLVSRGADEGIELVIRAFCEPGKDAILYCPPTYGMYSVSAETIGVERRTVPALENWQLDLQGISDNLDGTKVVFVCSPNNPTGQLINPQDLRTLLELTRGKAIVVADEAYIEFCPQATLTGWLVEYPHLVILRTLSKAFALAGLRCGFTLANEEVINLLLKVIAPYPLSTPVADIAAQALCPQGINAMRDRVAQTVQERQYLVNALKQTACVEHVFDSETNYILARFTASSSVFKSLWDQGIILRDQNKQPSLSGCLRITVGTRQENQRVIDALRAEPV.

Position 217 is an N6-(pyridoxal phosphate)lysine (lysine 217).

The protein belongs to the class-II pyridoxal-phosphate-dependent aminotransferase family. Histidinol-phosphate aminotransferase subfamily. As to quaternary structure, homodimer. It depends on pyridoxal 5'-phosphate as a cofactor.

The catalysed reaction is L-histidinol phosphate + 2-oxoglutarate = 3-(imidazol-4-yl)-2-oxopropyl phosphate + L-glutamate. It functions in the pathway amino-acid biosynthesis; L-histidine biosynthesis; L-histidine from 5-phospho-alpha-D-ribose 1-diphosphate: step 7/9. The sequence is that of Histidinol-phosphate aminotransferase from Salmonella heidelberg (strain SL476).